The chain runs to 210 residues: MCVSVGESVAQSLQQWDRKLWDVAMLHACNAVDETGRKRYPTLGVGTRFRTALRDSLDIYGVMATPGVDLEKTRFPVGVRSDLLPDKRPDIADVLYGIHRWLHGHADESSVEFEVSPYVNASAALRIANDGKIQLPKSAILGLLAVAVFAPENKGEVIPPDYQLSWYDHVFFISVWWGWQDHFREIVNVDRASLVALDFGDLWNGWTPVG.

This is an uncharacterized protein from Mycobacterium bovis (strain ATCC BAA-935 / AF2122/97).